The following is a 932-amino-acid chain: MDYNKTLNLPKTDFPMKANLPVREPEILKKWEEMDIYRRVLEKNKGKEKYILHDGPPYANGDIHIGTAMNKVLKDIVVKYKTMRGYDSPYVPGWDTHGLPIEQQVIKILGVKRHEMNPVEFRKVCKDFAFSQIERQRQQFKRLGVRGDWEKPYLTLDPEYEAKQIEVFGEMAKRGYIYKGLKPVYWCPSCETALAEAEIEYFDETSDSIYVKFRVRDDLGKFKGIVEDLSNVYFVIWTTTTWTIPANLAIALNPEFDYSLTKFGDEVYIIAKDMIEEVRKETGLGDYEILATFKGKELEGMKAVHPIYNRDSIVVLGEHVTLDAGTGCVHTAPGHGEEDFLVGQEYGLEALNPIDEKGYFTDKAPGYEGLYYAEANKVIKEDLRKANALLAEKKITHSYPHCWRCKSPILFRATEQWFASVEGFREEALKAIKEVNWYPAWGEERITNMVRDRKDWCISRQRVWGVPIPIFYCENCGKPLINDETINAVKELFRQKGSDAWFEMSAEEILPEGIKCECGSTKFRKETDIMDVWFDSGSSHAAVLETHPDLKWPAELYLEGSDQHRGWFQSSLLTAVATRGKAPYKNVLTHGFVVDGEGRKMSKSLGNVVDPAEVIQEYGADVLRLWVVSADYTADMRTSPEILKQIAEVYRKIRNTARFLLGNLYDFDPDKDMLPYEELLEIDKWALYRLNRLVKQLTESFDKYEFYDFFHPVHNFCVVDMSSLYLDILKDRLYTYPAKSKERKAAQTTLYIILDTLVKLMAPVLAFTSEEIWWHMKHDRNNNFESVQLADWPQVKEEYDNPYIIEKWEKLFDIRKDISKALEIARSEKKIGHSLDAQVDIYPSSELYEFFKGFEDLQYVFIVSKVVLHDPQEVAPENAYVSEDYDLKITVTRAPGEKCERCWMYSETVGTIKEHPTICARCASHIEEQLKV.

The 'HIGH' region signature appears at 57–67; sequence PYANGDIHIGT. Position 559 (glutamate 559) interacts with L-isoleucyl-5'-AMP. A 'KMSKS' region motif is present at residues 600–604; the sequence is KMSKS. Lysine 603 lines the ATP pocket. Zn(2+)-binding residues include cysteine 899, cysteine 902, cysteine 919, and cysteine 922.

This sequence belongs to the class-I aminoacyl-tRNA synthetase family. IleS type 1 subfamily. As to quaternary structure, monomer. It depends on Zn(2+) as a cofactor.

It is found in the cytoplasm. It carries out the reaction tRNA(Ile) + L-isoleucine + ATP = L-isoleucyl-tRNA(Ile) + AMP + diphosphate. Functionally, catalyzes the attachment of isoleucine to tRNA(Ile). As IleRS can inadvertently accommodate and process structurally similar amino acids such as valine, to avoid such errors it has two additional distinct tRNA(Ile)-dependent editing activities. One activity is designated as 'pretransfer' editing and involves the hydrolysis of activated Val-AMP. The other activity is designated 'posttransfer' editing and involves deacylation of mischarged Val-tRNA(Ile). This chain is Isoleucine--tRNA ligase, found in Caldanaerobacter subterraneus subsp. tengcongensis (strain DSM 15242 / JCM 11007 / NBRC 100824 / MB4) (Thermoanaerobacter tengcongensis).